Here is a 120-residue protein sequence, read N- to C-terminus: Large ribosomal subunit protein uL18 (120 aa).

Belongs to the universal ribosomal protein uL18 family. In terms of assembly, part of the 50S ribosomal subunit; part of the 5S rRNA/L5/L18/L25 subcomplex. Contacts the 5S and 23S rRNAs.

Its function is as follows. This is one of the proteins that bind and probably mediate the attachment of the 5S RNA into the large ribosomal subunit, where it forms part of the central protuberance. This Bartonella tribocorum (strain CIP 105476 / IBS 506) protein is Large ribosomal subunit protein uL18.